Reading from the N-terminus, the 387-residue chain is Cystathionine beta-lyase (387 aa).

Lys-204 carries the N6-(pyridoxal phosphate)lysine modification.

Belongs to the trans-sulfuration enzymes family. As to quaternary structure, homotetramer. It depends on pyridoxal 5'-phosphate as a cofactor.

It is found in the cytoplasm. It catalyses the reaction L,L-cystathionine + H2O = L-homocysteine + pyruvate + NH4(+). The enzyme catalyses an S-substituted L-cysteine + H2O = a thiol + pyruvate + NH4(+). Its pathway is amino-acid biosynthesis; L-methionine biosynthesis via de novo pathway; L-homocysteine from L-cystathionine: step 1/1. In terms of biological role, catalyzes the cleavage of cystathionine to homocysteine, pyruvate and ammonia during methionine biosynthesis. This Coxiella burnetii (strain RSA 493 / Nine Mile phase I) protein is Cystathionine beta-lyase (metC).